Reading from the N-terminus, the 294-residue chain is Lipoyl synthase 1 (294 aa).

[4Fe-4S] cluster contacts are provided by Cys-38, Cys-43, Cys-49, Cys-64, Cys-68, Cys-71, and Ser-279. Positions 50-268 (FAGGTATFLI…EEGQTRFGFL (219 aa)) constitute a Radical SAM core domain.

Belongs to the radical SAM superfamily. Lipoyl synthase family. Requires [4Fe-4S] cluster as cofactor.

It is found in the cytoplasm. The enzyme catalyses [[Fe-S] cluster scaffold protein carrying a second [4Fe-4S](2+) cluster] + N(6)-octanoyl-L-lysyl-[protein] + 2 oxidized [2Fe-2S]-[ferredoxin] + 2 S-adenosyl-L-methionine + 4 H(+) = [[Fe-S] cluster scaffold protein] + N(6)-[(R)-dihydrolipoyl]-L-lysyl-[protein] + 4 Fe(3+) + 2 hydrogen sulfide + 2 5'-deoxyadenosine + 2 L-methionine + 2 reduced [2Fe-2S]-[ferredoxin]. Its pathway is protein modification; protein lipoylation via endogenous pathway; protein N(6)-(lipoyl)lysine from octanoyl-[acyl-carrier-protein]: step 2/2. Catalyzes the radical-mediated insertion of two sulfur atoms into the C-6 and C-8 positions of the octanoyl moiety bound to the lipoyl domains of lipoate-dependent enzymes, thereby converting the octanoylated domains into lipoylated derivatives. In Prochlorococcus marinus (strain SARG / CCMP1375 / SS120), this protein is Lipoyl synthase 1.